The chain runs to 226 residues: uncharacterized protein (226 aa).

The HTH arsR-type domain occupies 1-92 (MNPNIAKISS…QLLHIAPKAK (92 aa)). Positions 32–55 (AGELAYLANIKPQTASFHLNKLLE) form a DNA-binding region, H-T-H motif.

This is an uncharacterized protein from Bacillus subtilis (strain 168).